The sequence spans 485 residues: Glutamyl-tRNA(Gln) amidotransferase subunit A (485 aa).

Catalysis depends on charge relay system residues Lys79 and Ser154. Residue Ser178 is the Acyl-ester intermediate of the active site.

The protein belongs to the amidase family. GatA subfamily. In terms of assembly, heterotrimer of A, B and C subunits.

The catalysed reaction is L-glutamyl-tRNA(Gln) + L-glutamine + ATP + H2O = L-glutaminyl-tRNA(Gln) + L-glutamate + ADP + phosphate + H(+). Allows the formation of correctly charged Gln-tRNA(Gln) through the transamidation of misacylated Glu-tRNA(Gln) in organisms which lack glutaminyl-tRNA synthetase. The reaction takes place in the presence of glutamine and ATP through an activated gamma-phospho-Glu-tRNA(Gln). The protein is Glutamyl-tRNA(Gln) amidotransferase subunit A of Bacillus pumilus (strain SAFR-032).